The sequence spans 276 residues: Undecaprenyl-diphosphatase (276 aa).

7 helical membrane passes run Ala42–Phe62, Ala88–Gly108, Leu116–Ala136, Met149–Val169, Val187–Phe207, Ser222–Leu242, and Phe253–Val273.

This sequence belongs to the UppP family.

It is found in the cell membrane. It carries out the reaction di-trans,octa-cis-undecaprenyl diphosphate + H2O = di-trans,octa-cis-undecaprenyl phosphate + phosphate + H(+). Catalyzes the dephosphorylation of undecaprenyl diphosphate (UPP). Confers resistance to bacitracin. This is Undecaprenyl-diphosphatase from Acidothermus cellulolyticus (strain ATCC 43068 / DSM 8971 / 11B).